The following is a 1252-amino-acid chain: MIEIWKSQCTRILSISPDSGIQYWKKTESMKSQYLEEVGVALDSFVYWKEVIWKTKQEFRAEYSFPKTSLAANKVIDDDDINIDSLKFVKEVINVFVGNINVLVKINDPRSWFFVPGLKEQIEQVLKEFKLLRFFVCFVSNKCIEPQYRCSTFYSHVLIEASHIAMVVCLHLPIYGNGNQDLAPSEKMIDIWKSHCPDSFPYMKVISKTNVIIKTLYVDELRSCPSCNSYDSFDNWKEVIWKTKQEFRAEYSFPKTSLAVNKVDDVNTHSPKFVMEVIDVFVGNLNVLVEINDPSSWLFVPGHMKEQIEQVLKELKLLRFFVCFVSSKCIEPQYRCTTFYTLVLIEASHNAMVVWLHLPVYGNGNQDLAPSEVSRLFSDFMEMKIKSIEPGISRNSIYIDVLQALKSTIPQAQKKQLDIPTHSLTVGFSGQMANLQEMLCLLRDNLIHLPILDLEFHLQDMDSVIVDAGLLIYSLYDIKGEKEDTVLDDMNQALGFDLPRNIEPIKAMVYLVMQKAFHCNLPRIHGLGYVDFLLKNLNDFQGRYSDSLAFLKNQLQVIQTEFESLQPFLKVVAEEPHNKLKTLNEDCATQIIRKAYEVEYVVDACINKETPHWCLKCWLLDIIEENTCIKAKIQEKNTVEDTMKSVIARTSSQLARTPRMNEEIVGFEDDLLLALLRDAIGEGSVRRELHANELSDMLRKTLLPRRYLILVDDVWENSVWDDLRGCFPDANNRSRIFGPSHPMLGPPKSKLPTHQMLSTGREVGEQVANNLGTHIHNDSRAIVDQSYHVLPCHLKSCFLYFGAFLEDRVIDISRLIRLWISEAFIKSSEGRSLEDIAEGYLENLIGRNLVMVTQRAISDGKVKACRLHDVLLDFCKERAAEENFLLWIKRDQTTKAVYSHKQHAHLAFTEMDNLVEWSASCSLVGSVLFKSYDPYFACRPLSSHAFAVSHILLNFKFLKVLDLEHQIVIDFIPTELPYLRYFSALIDQNSIPSSKSNLWNLETLILKRRSAATYKTLLLPSTVWDMVKLIYLYIPNFSPENKKALFKNSPKLDDLETLSNPYFARVEDYLSETVDHLKHLEVLELYRVEFGDHGEWKVSSGKFPKLKILKLDYVSLMKWIVADDAFPNLEQLVSLGCQNLMEIPSCFTDILSLKYIEVDICNKSVVKSAKYIQETQVEYNQNTNFKLVIIKKLVLKFDRFHGDEEIRKRLSSLPGIKSISINRGEKKLTVGGDVDADEVRLVVGKLNKRDML.

Positions 543–566 form a coiled coil; sequence RYSDSLAFLKNQLQVIQTEFESLQ. NB-ARC domains are found at residues 684-736 and 786-830; these read SVRR…RSRI and SYHV…SSEG. 7 LRR repeats span residues 955–980, 998–1026, 1077–1100, 1103–1125, 1126–1149, 1187–1212, and 1213–1236; these read FKFLKVLDLEHQIVIDFIPTELPYLR, LWNLETLILKRRSAATYKTLLLPSTVWDM, LKHLEVLELYRVEFGDHGEWKVSS, FPKLKILKLDYVSLMKWIVADDA, FPNLEQLVSLGCQNLMEIPSCFTD, LVIIKKLVLKFDRFHGDEEIRKRLSS, and LPGIKSISINRGEKKLTVGGDVDA. In terms of domain architecture, HMA spans 1188–1252; the sequence is VIIKKLVLKF…VGKLNKRDML (65 aa).

It belongs to the disease resistance NB-LRR family.

It is found in the cytoplasm. Its subcellular location is the membrane. Its function is as follows. Confers resistance to late blight (Phytophthora infestans) races carrying the avirulence gene Avr1. Resistance proteins guard the plant against pathogens that contain an appropriate avirulence protein via an indirect interaction with this avirulence protein. That triggers a defense system including the hypersensitive response, which restricts the pathogen growth. The protein is Putative late blight resistance protein homolog R1B-11 (R1B-11) of Solanum demissum (Wild potato).